We begin with the raw amino-acid sequence, 79 residues long: UPF0180 protein BCG9842_B3897 (79 aa).

This sequence belongs to the UPF0180 family.

The chain is UPF0180 protein BCG9842_B3897 from Bacillus cereus (strain G9842).